The sequence spans 393 residues: N-lysine methyltransferase KMT5A (393 aa).

The tract at residues 68-88 is disordered; it reads PGPEMVERRGPGRPRTDGENV. Residues 72–85 are compositionally biased toward basic and acidic residues; that stretch reads MVERRGPGRPRTDG. The residue at position 100 (Ser-100) is a Phosphoserine. Residues 134 to 163 adopt a coiled-coil conformation; the sequence is RKREEKRNAGNAVRSAMKSEEQKIKDARKG. Positions 135–241 are disordered; it reads KREEKRNAGN…SRKSKAELQS (107 aa). Over residues 150–162 the composition is skewed to basic and acidic residues; it reads MKSEEQKIKDARK. N6-acetyllysine is present on Lys-162. Thr-181 carries the post-translational modification Phosphothreonine. The segment covering 197–213 has biased composition (basic residues); sequence ALKKPIKGKQAPRKKAQ. Positions 257-378 constitute an SET domain; it reads EGMKIDLIDG…AGEELLYDYG (122 aa). S-adenosyl-L-methionine-binding positions include 267 to 269, Tyr-312, and 339 to 340; these read KGR and NH.

It belongs to the class V-like SAM-binding methyltransferase superfamily. Histone-lysine methyltransferase family. PR/SET subfamily. In terms of assembly, interacts with L3MBTL1. Interacts with SIRT2 (phosphorylated form); the interaction is direct, stimulates KMT5A-mediated methyltransferase activity at histone H4 'Lys-20' (H4K20me1) and is increased in a H(2)O(2)-induced oxidative stress-dependent manner. In terms of processing, acetylated at Lys-162; does not affect methyltransferase activity. Deacetylated at Lys-162 possibly by SIRT2; does not change methyltransferase activity. Post-translationally, ubiquitinated and degraded by the DCX(DTL) complex.

The protein localises to the nucleus. It is found in the chromosome. It carries out the reaction L-lysyl(20)-[histone H4] + S-adenosyl-L-methionine = N(6)-methyl-L-lysyl(20)-[histone H4] + S-adenosyl-L-homocysteine + H(+). It catalyses the reaction L-lysyl-[protein] + S-adenosyl-L-methionine = N(6)-methyl-L-lysyl-[protein] + S-adenosyl-L-homocysteine + H(+). In terms of biological role, protein-lysine N-methyltransferase that monomethylates both histones and non-histone proteins. Specifically monomethylates 'Lys-20' of histone H4 (H4K20me1). H4K20me1 is enriched during mitosis and represents a specific tag for epigenetic transcriptional repression. Mainly functions in euchromatin regions, thereby playing a central role in the silencing of euchromatic genes. Required for cell proliferation, probably by contributing to the maintenance of proper higher-order structure of DNA during mitosis. Involved in chromosome condensation and proper cytokinesis. Nucleosomes are preferred as substrate compared to free histones. Mediates monomethylation of p53/TP53 at 'Lys-382', leading to repress p53/TP53-target genes. Plays a negative role in TGF-beta response regulation and a positive role in cell migration. This is N-lysine methyltransferase KMT5A from Homo sapiens (Human).